A 516-amino-acid polypeptide reads, in one-letter code: Lysophosphatidylcholine acyltransferase 2B (516 aa).

N-linked (GlcNAc...) asparagine glycosylation is present at asparagine 28. A run of 3 helical transmembrane segments spans residues 44–64, 68–88, and 102–122; these read THLS…LVPV, CIVF…INLP, and LIKS…GFLV. The HXXXXD motif signature appears at 142–147; the sequence is HSTFFD. EF-hand domains lie at 387–422 and 424–459; these read PISE…LCNP and NTEK…AFGV. The Ca(2+) site is built by aspartate 400, asparagine 402, aspartate 404, threonine 406, glutamate 411, aspartate 437, aspartate 439, aspartate 441, tyrosine 443, and glutamate 448.

The protein belongs to the 1-acyl-sn-glycerol-3-phosphate acyltransferase family.

The protein resides in the membrane. It functions in the pathway lipid metabolism; phospholipid metabolism. In terms of biological role, probable acetyltransferase. The chain is Lysophosphatidylcholine acyltransferase 2B (Lpcat2b) from Mus musculus (Mouse).